The primary structure comprises 310 residues: Small ribosomal subunit biogenesis GTPase RsgA (310 aa).

The CP-type G domain maps to 77–238 (LSKQSHILAA…IIDTPGIKGF (162 aa)). Residues 126 to 129 (NKTD) and 180 to 188 (GNSGVGKST) each bind GTP. Zn(2+) contacts are provided by C262, C267, H269, and C275.

The protein belongs to the TRAFAC class YlqF/YawG GTPase family. RsgA subfamily. In terms of assembly, monomer. Associates with 30S ribosomal subunit, binds 16S rRNA. The cofactor is Zn(2+).

It localises to the cytoplasm. In terms of biological role, one of several proteins that assist in the late maturation steps of the functional core of the 30S ribosomal subunit. Helps release RbfA from mature subunits. May play a role in the assembly of ribosomal proteins into the subunit. Circularly permuted GTPase that catalyzes slow GTP hydrolysis, GTPase activity is stimulated by the 30S ribosomal subunit. The polypeptide is Small ribosomal subunit biogenesis GTPase RsgA (Phocaeicola vulgatus (strain ATCC 8482 / DSM 1447 / JCM 5826 / CCUG 4940 / NBRC 14291 / NCTC 11154) (Bacteroides vulgatus)).